The chain runs to 324 residues: tRNA U34 carboxymethyltransferase (324 aa).

Carboxy-S-adenosyl-L-methionine is bound by residues Lys-91, Trp-105, Lys-110, Gly-130, 152-154, 181-182, Met-196, Tyr-200, and Arg-315; these read DPS and IE.

Belongs to the class I-like SAM-binding methyltransferase superfamily. CmoB family. Homotetramer.

It carries out the reaction carboxy-S-adenosyl-L-methionine + 5-hydroxyuridine(34) in tRNA = 5-carboxymethoxyuridine(34) in tRNA + S-adenosyl-L-homocysteine + H(+). In terms of biological role, catalyzes carboxymethyl transfer from carboxy-S-adenosyl-L-methionine (Cx-SAM) to 5-hydroxyuridine (ho5U) to form 5-carboxymethoxyuridine (cmo5U) at position 34 in tRNAs. This chain is tRNA U34 carboxymethyltransferase, found in Aliivibrio fischeri (strain ATCC 700601 / ES114) (Vibrio fischeri).